The sequence spans 404 residues: Clavilactone A biosynthesis cluster protein Y (404 aa).

In terms of biological role, part of the gene cluster that mediates the biosynthesis of clavilactone A, a meroterpenoid that features a unique benzo-fused ten-membered carbocyclic ring unit with an alpha,beta-epoxy-gamma-lactone moiety, forming an intriguing 10/5/3 tricyclic nested skeleton. ClaR, ClaS and ClaT are sufficient to produce clavilactone A and the function of claY, if any, has still to be identified. The biosynthesis begins with the prenyltransferase claS that transfers geranyl pyrophosphate (GPP) to hydroquinone to produces geranylhydroquinon. The cytochrome P450 monooxygenase claR then catalyzes the diradical coupling reaction between the intramolecular hydroquinone and allyl moieties to form the benzo-fused ten-membered carbocyclic ring unit of wigantol. Finally the cytochrome P450 monooxygenase claT exquisitely and stereoselectively assembles the alpha,beta-epoxy-gamma-lactone moiety, producing clavilactone A via arnebinol A. The polypeptide is Clavilactone A biosynthesis cluster protein Y (Ampulloclitocybe clavipes (Club foot)).